The primary structure comprises 682 residues: Epithelial sodium channel subunit alpha (682 aa).

At 1 to 111 (MLMRLLPLPS…CSKHNRMKTA (111 aa)) the chain is on the cytoplasmic side. Positions 34–69 (AQGPLPPQPLQGPLKGDKCEQPGLGPEPTAPQQHTE) are disordered. Residues 112-132 (FWAVLWLCTFGMMYWQFALLF) traverse the membrane as a helical segment. Over 133 to 586 (GEYFSYPVSL…SQWSLWFGSS (454 aa)) the chain is Extracellular. 10 disulfides stabilise this stretch: Cys-159-Cys-329, Cys-253-Cys-260, Cys-306-Cys-313, Cys-418-Cys-503, Cys-440-Cys-480, Cys-440-Cys-499, Cys-444-Cys-495, Cys-453-Cys-480, Cys-453-Cys-503, and Cys-455-Cys-469. An N-linked (GlcNAc...) asparagine glycan is attached at Asn-191. Residues 201–267 (RSRRSLADTL…SDCFYQTSSS (67 aa)) are gating release of inhibition by proteolysis (GRIP); protease-sensitive region that is responsible for the proteolytic activation of the channel. Residues 221-240 (PEPRRARSSDPSSVRDNNPR) are disordered. Asn-504 carries N-linked (GlcNAc...) asparagine glycosylation. The helical transmembrane segment at 587 to 607 (VLSVVEMAEFMFDLLVITLLM) threads the bilayer. Residues 608–682 (LLRRFRSRYW…SSAACAPREP (75 aa)) lie on the Cytoplasmic side of the membrane. The PY motif; recruits WW domain-containing proteins and is thereby required for ubiquitination and inhibition of the channel by NEDD4 and NEDD4L motif lies at 653 to 657 (PPPAY).

It belongs to the amiloride-sensitive sodium channel (TC 1.A.6) family. SCNN1A subfamily. Heterotrimer; containing an alpha/SCNN1A, a beta/SCNN1B and a gamma/SCNN1G subunit. Interacts with WWP1 (via WW domains). Interacts with WWP2 (via WW domains); inhibits the channel. Interacts with BPIFA1; the interaction is indirect via SCNN1B and inhibits the proteolytic processing of SCNN1A and SCNN1G and the activation of ENaC. Interacts with the full-length immature form of PCSK9 (pro-PCSK9). Post-translationally, ubiquitinated. Can be ubiquitinated at multiple sites and undergo monoubiquitination and polyubiquitination. Ubiquitination by NEDD4 or NEDD4L inhibits the ENaC channel through endocytosis, intracellular retention and degradation of its individual subunits. In terms of processing, N-glycosylated. ENaC is activated through the proteolytic maturation of its subunits. Furin cleaves the SCNN1A subunit, which results in a stepwise increase in the open probability of the channel due to the release of an inhibitory tract. BPIFA1, which is recruited by the SCNN1B subunit, prevents the proteolytic activation of ENaC.

It is found in the apical cell membrane. The protein localises to the cell projection. It localises to the cilium. The protein resides in the cytoplasmic granule. Its subcellular location is the cytoplasm. It is found in the cytoplasmic vesicle. The protein localises to the secretory vesicle. It localises to the acrosome. The protein resides in the flagellum. The catalysed reaction is Na(+)(in) = Na(+)(out). Originally identified and characterized by its inhibition by the diuretic drug amiloride. Functionally, this is one of the three pore-forming subunits of the heterotrimeric epithelial sodium channel (ENaC), a critical regulator of sodium balance and fluid homeostasis. ENaC operates in epithelial tissues, where it mediates the electrodiffusion of sodium ions from extracellular fluid through the apical membrane of cells, with water following osmotically. It plays a key role in maintaining sodium homeostasis through electrogenic sodium reabsorption in the kidneys. Additionally, ENaC is essential for airway surface liquid homeostasis, which is crucial for proper mucus clearance. The polypeptide is Epithelial sodium channel subunit alpha (Cavia porcellus (Guinea pig)).